We begin with the raw amino-acid sequence, 321 residues long: Cytochrome c biogenesis protein CcsA (321 aa).

The next 8 helical transmembrane spans lie at 17–37 (IVSI…IVGL), 43–63 (KGMI…WIYS), 71–91 (LYES…VPKI), 98–118 (LSAI…SGLL), 143–163 (MVLS…LLVI), 225–245 (VISL…VWAN), 258–275 (ETWA…LHTR), and 286–306 (AIVA…VNLL).

This sequence belongs to the CcmF/CycK/Ccl1/NrfE/CcsA family. As to quaternary structure, may interact with Ccs1.

The protein localises to the plastid. It localises to the chloroplast thylakoid membrane. In terms of biological role, required during biogenesis of c-type cytochromes (cytochrome c6 and cytochrome f) at the step of heme attachment. This is Cytochrome c biogenesis protein CcsA from Platanus occidentalis (Sycamore).